Here is a 195-residue protein sequence, read N- to C-terminus: ATP-dependent Clp protease proteolytic subunit (195 aa).

The active-site Nucleophile is the Ser-99. His-124 is a catalytic residue.

Belongs to the peptidase S14 family. In terms of assembly, fourteen ClpP subunits assemble into 2 heptameric rings which stack back to back to give a disk-like structure with a central cavity, resembling the structure of eukaryotic proteasomes.

It localises to the cytoplasm. It catalyses the reaction Hydrolysis of proteins to small peptides in the presence of ATP and magnesium. alpha-casein is the usual test substrate. In the absence of ATP, only oligopeptides shorter than five residues are hydrolyzed (such as succinyl-Leu-Tyr-|-NHMec, and Leu-Tyr-Leu-|-Tyr-Trp, in which cleavage of the -Tyr-|-Leu- and -Tyr-|-Trp bonds also occurs).. Cleaves peptides in various proteins in a process that requires ATP hydrolysis. Has a chymotrypsin-like activity. Plays a major role in the degradation of misfolded proteins. The polypeptide is ATP-dependent Clp protease proteolytic subunit (Caldicellulosiruptor saccharolyticus (strain ATCC 43494 / DSM 8903 / Tp8T 6331)).